The primary structure comprises 65 residues: Cell death protein rpr (65 aa).

As to quaternary structure, interacts with Diap2 (via BIR2 domain).

In terms of biological role, activator of apoptosis, as well as grim and hid, that acts on the effector Dredd. The polypeptide is Cell death protein rpr (rpr) (Drosophila melanogaster (Fruit fly)).